Here is a 171-residue protein sequence, read N- to C-terminus: Co-chaperone protein HscB (171 aa).

The J domain occupies 2–74; sequence DYFTLFGLPA…LMRAEYLLSL (73 aa).

Belongs to the HscB family. As to quaternary structure, interacts with HscA and stimulates its ATPase activity. Interacts with IscU.

Its function is as follows. Co-chaperone involved in the maturation of iron-sulfur cluster-containing proteins. Seems to help targeting proteins to be folded toward HscA. This chain is Co-chaperone protein HscB, found in Shigella boydii serotype 18 (strain CDC 3083-94 / BS512).